A 163-amino-acid polypeptide reads, in one-letter code: NADH-quinone oxidoreductase subunit I 1 (163 aa).

2 4Fe-4S ferredoxin-type domains span residues 53 to 83 (LRRY…IEAG) and 94 to 123 (VRYD…EGPN). [4Fe-4S] cluster-binding residues include cysteine 63, cysteine 66, cysteine 69, cysteine 73, cysteine 103, cysteine 106, cysteine 109, and cysteine 113.

This sequence belongs to the complex I 23 kDa subunit family. As to quaternary structure, NDH-1 is composed of 14 different subunits. Subunits NuoA, H, J, K, L, M, N constitute the membrane sector of the complex. Requires [4Fe-4S] cluster as cofactor.

It localises to the cell inner membrane. The catalysed reaction is a quinone + NADH + 5 H(+)(in) = a quinol + NAD(+) + 4 H(+)(out). NDH-1 shuttles electrons from NADH, via FMN and iron-sulfur (Fe-S) centers, to quinones in the respiratory chain. The immediate electron acceptor for the enzyme in this species is believed to be ubiquinone. Couples the redox reaction to proton translocation (for every two electrons transferred, four hydrogen ions are translocated across the cytoplasmic membrane), and thus conserves the redox energy in a proton gradient. The polypeptide is NADH-quinone oxidoreductase subunit I 1 (Rhizobium etli (strain ATCC 51251 / DSM 11541 / JCM 21823 / NBRC 15573 / CFN 42)).